A 182-amino-acid chain; its full sequence is MKVNKKRLAEIFNVDPRTIERWQSQGLPCASKGSKGIESVFDTAMAIQWYAQRETDIENEKLRKELDDLRAAAESDLQPGTIDYERYRLTKAQADAQELKNAREDGVVLETELFTFILQRVAQEISGILVRVPLTLQRKYPDISPSHLDVVKTEIAKASNVAAKAGENVGGWIDDFRRAEGS.

31–36 (SKGSKG) contributes to the ATP binding site.

The protein belongs to the terminase small subunit family. In terms of assembly, heterooligomer of gp1 and gp2.

In terms of biological role, involved in the initiation of the phage DNA packaging into the prohead. Processes replicating concatemeric DNA into pieces of unit length with cohesive ends. The protein is P21 prophage-derived terminase small subunit (nohA) of Escherichia coli O6:H1 (strain CFT073 / ATCC 700928 / UPEC).